The chain runs to 297 residues: Formylmethanofuran--tetrahydromethanopterin formyltransferase (297 aa).

It belongs to the FTR family. In terms of assembly, homotetramer.

It is found in the cytoplasm. The enzyme catalyses N-formylmethanofuran + 5,6,7,8-tetrahydromethanopterin + H(+) = N(5)-formyl-5,6,7,8-tetrahydromethanopterin + methanofuran. It functions in the pathway one-carbon metabolism; methanogenesis from CO(2); 5,10-methenyl-5,6,7,8-tetrahydromethanopterin from CO(2): step 2/3. In terms of biological role, catalyzes the reversible transfer of a formyl group from formylmethanofuran (formyl-MFR) to tetrahydromethanopterin (H(4)MPT) to produce 5-formyl tetrahydromethanopterin (5-formyl-H(4)MPT) and methanofuran (MFR). This Methanothermus fervidus (strain ATCC 43054 / DSM 2088 / JCM 10308 / V24 S) protein is Formylmethanofuran--tetrahydromethanopterin formyltransferase.